We begin with the raw amino-acid sequence, 204 residues long: Chaperone protein TorD (204 aa).

This sequence belongs to the TorD/DmsD family. TorD subfamily.

It is found in the cytoplasm. Its function is as follows. Involved in the biogenesis of TorA. Acts on TorA before the insertion of the molybdenum cofactor and, as a result, probably favors a conformation of the apoenzyme that is competent for acquiring the cofactor. The sequence is that of Chaperone protein TorD from Shewanella baltica (strain OS223).